The sequence spans 886 residues: Alanine--tRNA ligase (886 aa).

4 residues coordinate Zn(2+): His-568, His-572, Cys-670, and His-674.

This sequence belongs to the class-II aminoacyl-tRNA synthetase family. It depends on Zn(2+) as a cofactor.

The protein localises to the cytoplasm. The enzyme catalyses tRNA(Ala) + L-alanine + ATP = L-alanyl-tRNA(Ala) + AMP + diphosphate. Functionally, catalyzes the attachment of alanine to tRNA(Ala) in a two-step reaction: alanine is first activated by ATP to form Ala-AMP and then transferred to the acceptor end of tRNA(Ala). Also edits incorrectly charged Ser-tRNA(Ala) and Gly-tRNA(Ala) via its editing domain. The chain is Alanine--tRNA ligase from Prochlorococcus marinus (strain NATL2A).